The chain runs to 304 residues: Putative F-box/LRR-repeat protein 21 (304 aa).

The F-box domain maps to 43-90; that stretch reads RRNWVDLPPELTTSILLRLSLTDILDNAQKVCKEWRRICKDPSMWRKI. LRR repeat units follow at residues 132–159, 173–198, 218–241, and 243–268; these read LSYI…GVVN, THSC…KLNS, GPLE…HLQL, and ANRL…DVRK.

The protein is Putative F-box/LRR-repeat protein 21 (FBL21) of Arabidopsis thaliana (Mouse-ear cress).